Reading from the N-terminus, the 296-residue chain is Cytidine deaminase (296 aa).

CMP/dCMP-type deaminase domains are found at residues 47 to 167 and 186 to 296; these read DSHE…FGPA and ESDD…VDPV. A substrate-binding site is contributed by 88–90; the sequence is NLE. His101 contributes to the Zn(2+) binding site. Glu103 serves as the catalytic Proton donor. Residues Cys128 and Cys131 each coordinate Zn(2+).

The protein belongs to the cytidine and deoxycytidylate deaminase family. As to quaternary structure, homodimer. Zn(2+) serves as cofactor.

The enzyme catalyses cytidine + H2O + H(+) = uridine + NH4(+). It catalyses the reaction 2'-deoxycytidine + H2O + H(+) = 2'-deoxyuridine + NH4(+). Its function is as follows. This enzyme scavenges exogenous and endogenous cytidine and 2'-deoxycytidine for UMP synthesis. This is Cytidine deaminase from Shewanella amazonensis (strain ATCC BAA-1098 / SB2B).